The chain runs to 218 residues: MKFFIDTANLDQIREAHDLGVLDGVTTNPSLMAKEGIKGVENQRRHYVEICNIVQGDVSAEVIATDYEGMVREGKELAALNPHIVVKVPCIADGIKAIKHFSGKGIRTNCTLVFSTGQALLAAKAGATYVSPFVGRLDDICEDGVGLVADIVRMYRFYNYPTQVLAASIRSSKHIMECVEAGADVATCPLSAIKGLMNHPLTDAGLKKFLEDYKKVNE.

The active-site Schiff-base intermediate with substrate is the Lys87.

The protein belongs to the transaldolase family. Type 3B subfamily.

Its subcellular location is the cytoplasm. The catalysed reaction is D-sedoheptulose 7-phosphate + D-glyceraldehyde 3-phosphate = D-erythrose 4-phosphate + beta-D-fructose 6-phosphate. It participates in carbohydrate degradation; pentose phosphate pathway; D-glyceraldehyde 3-phosphate and beta-D-fructose 6-phosphate from D-ribose 5-phosphate and D-xylulose 5-phosphate (non-oxidative stage): step 2/3. Functionally, transaldolase is important for the balance of metabolites in the pentose-phosphate pathway. This chain is Probable transaldolase, found in Bacteroides fragilis (strain YCH46).